The following is an 89-amino-acid chain: Small ribosomal subunit protein uS14A (89 aa).

Belongs to the universal ribosomal protein uS14 family. Part of the 30S ribosomal subunit. Contacts proteins S3 and S10.

In terms of biological role, binds 16S rRNA, required for the assembly of 30S particles and may also be responsible for determining the conformation of the 16S rRNA at the A site. The sequence is that of Small ribosomal subunit protein uS14A from Lacticaseibacillus paracasei (strain ATCC 334 / BCRC 17002 / CCUG 31169 / CIP 107868 / KCTC 3260 / NRRL B-441) (Lactobacillus paracasei).